We begin with the raw amino-acid sequence, 260 residues long: Shikimate dehydrogenase (260 aa).

K71 functions as the Proton acceptor in the catalytic mechanism. G124–A128 contacts NADP(+).

This sequence belongs to the shikimate dehydrogenase family.

The enzyme catalyses shikimate + NADP(+) = 3-dehydroshikimate + NADPH + H(+). The protein operates within metabolic intermediate biosynthesis; chorismate biosynthesis; chorismate from D-erythrose 4-phosphate and phosphoenolpyruvate: step 4/7. The polypeptide is Shikimate dehydrogenase (aroE) (Sulfurisphaera tokodaii (strain DSM 16993 / JCM 10545 / NBRC 100140 / 7) (Sulfolobus tokodaii)).